The following is a 332-amino-acid chain: Gibberellin 2-beta-dioxygenase (332 aa).

In terms of domain architecture, Fe2OG dioxygenase spans 175–280; it reads KSDSCFRLNH…RLSMIYFGGP (106 aa). Fe cation is bound by residues histidine 204, aspartate 206, and histidine 261. The active site involves arginine 271.

The protein belongs to the iron/ascorbate-dependent oxidoreductase family. GA2OX subfamily. The cofactor is Fe cation.

The catalysed reaction is gibberellin A1 + 2-oxoglutarate + O2 = gibberellin A8 + succinate + CO2. The protein operates within plant hormone biosynthesis; gibberellin biosynthesis. Catalyzes the 2-beta-hydroxylation of several biologically active gibberellins, leading to the homeostatic regulation of their endogenous level. Catabolism of gibberellins (GAs) plays a central role in plant development. Converts GA9/GA20 to GA51/GA29 and GA4/GA1 to GA34/GA8. The protein is Gibberellin 2-beta-dioxygenase (GA2OX1) of Phaseolus coccineus (Scarlet runner bean).